Here is a 258-residue protein sequence, read N- to C-terminus: Translocon-associated protein subunit alpha (258 aa).

The first 24 residues, 1–24 (MMNLRVLFLALLLLASPLLQVARC), serve as a signal peptide directing secretion. The Lumenal segment spans residues 25–190 (QSDAEDHSSL…ESGGLLSGES (166 aa)). Asparagine 57, asparagine 119, and asparagine 127 each carry an N-linked (GlcNAc...) asparagine glycan. A helical transmembrane segment spans residues 191–209 (VFLLTLGIGLLLLLGLWAY). Over 210 to 258 (SQVQRLTKKTKKVSKVEVGTRSTEASLDEWLEGTTLAKTSSGKTKNKKN) the chain is Cytoplasmic.

The protein belongs to the TRAP-alpha family. Heterotetramer of TRAP-alpha, TRAP-beta, TRAP-delta and TRAP-gamma. In terms of processing, phosphorylated in its cytoplasmic tail.

The protein resides in the endoplasmic reticulum membrane. Its function is as follows. TRAP proteins are part of a complex whose function is to bind calcium to the ER membrane and thereby regulate the retention of ER resident proteins. May be involved in the recycling of the translocation apparatus after completion of the translocation process or may function as a membrane-bound chaperone facilitating folding of translocated proteins. This Arabidopsis thaliana (Mouse-ear cress) protein is Translocon-associated protein subunit alpha.